Here is a 493-residue protein sequence, read N- to C-terminus: MTTDALTALLPFIVLSAAAVAVMLAIAIRRSFRLVFWLTVGGLLAGLSTLPHASSVAPLQVTDLLRVDAYGLFFHALFLLAALVVALLCLAYFRRRENENEEIFVLLLTSTLGALLLVSSAHLAMFFLGLEVLTISLFPMIAYSVRASRPLEAGIKYLMLSGLASSFLMFGMAMVYGDLGVLSFEQIGAHGAELEQKPLALAGLFLILAAIGFKLSLVPFHLWTPDVYQGAPTPVTAFLATVSKASVFALLLRFFTAAHAERSETFLCVLGLLAVVSILAGNLLALLQVSLKRLLAYSSIAHMGYLLTGFVAAGLLRRDLQTETIAFYLAAYTVTSLTAFGAISALSDDDRESDRLSDYAGLFWRSPWLAAVLTLSLLSLAGIPLTVGFVGKFYVFAVGVQAETWPLVATVVIGSGIGIYYYLRVVLTMIQPAGVGQRVTLHPAAGTALAAAALVILAAGLFPQPLIDAAANVPQPPPTADSPQRLTATGGLP.

14 consecutive transmembrane segments (helical) span residues 8–28 (ALLP…AIAI), 34–54 (LVFW…PHAS), 71–91 (GLFF…LCLA), 102–122 (EIFV…SSAH), 123–143 (LAMF…MIAY), 157–177 (YLML…MVYG), 200–220 (ALAG…LVPF), 232–252 (PTPV…ALLL), 266–286 (FLCV…LLAL), 294–314 (LLAY…VAAG), 325–345 (IAFY…AISA), 370–390 (AAVL…VGFV), 405–427 (WPLV…RVVL), and 443–463 (PAAG…GLFP). The disordered stretch occupies residues 473-493 (VPQPPPTADSPQRLTATGGLP).

The protein belongs to the complex I subunit 2 family. As to quaternary structure, NDH-1 is composed of 14 different subunits. Subunits NuoA, H, J, K, L, M, N constitute the membrane sector of the complex.

The protein resides in the cell inner membrane. The catalysed reaction is a quinone + NADH + 5 H(+)(in) = a quinol + NAD(+) + 4 H(+)(out). NDH-1 shuttles electrons from NADH, via FMN and iron-sulfur (Fe-S) centers, to quinones in the respiratory chain. The immediate electron acceptor for the enzyme in this species is believed to be ubiquinone. Couples the redox reaction to proton translocation (for every two electrons transferred, four hydrogen ions are translocated across the cytoplasmic membrane), and thus conserves the redox energy in a proton gradient. This Methylococcus capsulatus (strain ATCC 33009 / NCIMB 11132 / Bath) protein is NADH-quinone oxidoreductase subunit N.